The chain runs to 271 residues: Formamidopyrimidine-DNA glycosylase (271 aa).

The Schiff-base intermediate with DNA role is filled by Pro-2. Glu-3 acts as the Proton donor in catalysis. The Proton donor; for beta-elimination activity role is filled by Lys-58. The DNA site is built by His-92, Arg-111, and Lys-152. The FPG-type zinc-finger motif lies at 237-271; sequence YVYGKVQKPCKICNNTITLIRQNGRSTYFCNACQN. The active-site Proton donor; for delta-elimination activity is the Arg-261.

Belongs to the FPG family. In terms of assembly, monomer. Requires Zn(2+) as cofactor.

It carries out the reaction Hydrolysis of DNA containing ring-opened 7-methylguanine residues, releasing 2,6-diamino-4-hydroxy-5-(N-methyl)formamidopyrimidine.. The catalysed reaction is 2'-deoxyribonucleotide-(2'-deoxyribose 5'-phosphate)-2'-deoxyribonucleotide-DNA = a 3'-end 2'-deoxyribonucleotide-(2,3-dehydro-2,3-deoxyribose 5'-phosphate)-DNA + a 5'-end 5'-phospho-2'-deoxyribonucleoside-DNA + H(+). In terms of biological role, involved in base excision repair of DNA damaged by oxidation or by mutagenic agents. Acts as a DNA glycosylase that recognizes and removes damaged bases. Has a preference for oxidized purines, such as 7,8-dihydro-8-oxoguanine (8-oxoG). Has AP (apurinic/apyrimidinic) lyase activity and introduces nicks in the DNA strand. Cleaves the DNA backbone by beta-delta elimination to generate a single-strand break at the site of the removed base with both 3'- and 5'-phosphates. The sequence is that of Formamidopyrimidine-DNA glycosylase from Wolbachia sp. subsp. Brugia malayi (strain TRS).